Here is a 611-residue protein sequence, read N- to C-terminus: Putative clathrin assembly protein At4g02650 (611 aa).

Residues glycine 26–lysine 162 form the ENTH domain. Disordered regions lie at residues glycine 158 to threonine 184 and threonine 337 to leucine 406. The span at methionine 386 to glutamine 401 shows a compositional bias: basic and acidic residues.

It localises to the membrane. The protein localises to the clathrin-coated pit. The protein resides in the golgi apparatus. It is found in the cytoplasmic vesicle. Its subcellular location is the clathrin-coated vesicle. The sequence is that of Putative clathrin assembly protein At4g02650 from Arabidopsis thaliana (Mouse-ear cress).